The primary structure comprises 329 residues: Probable alpha-1,2-galactosyltransferase gmh1 (329 aa).

The Cytoplasmic portion of the chain corresponds to 1 to 14 (MLSFFTKNTLTKRK). The helical; Signal-anchor for type II membrane protein transmembrane segment at 15 to 35 (LIMLALAIVFTFFAFGLYFIP) threads the bilayer. Over 36–329 (HDEISVFDFK…LWTKYKDKII (294 aa)) the chain is Lumenal. 2 N-linked (GlcNAc...) asparagine glycosylation sites follow: N127 and N169.

The protein belongs to the glycosyltransferase 34 family.

The protein localises to the golgi apparatus membrane. The sequence is that of Probable alpha-1,2-galactosyltransferase gmh1 (gmh1) from Schizosaccharomyces pombe (strain 972 / ATCC 24843) (Fission yeast).